The following is a 195-amino-acid chain: HTH-type transcriptional regulator TtmR (195 aa).

The HTH marR-type domain occupies 47–177 (DSQLCFAVYA…LLDNLASMRD (131 aa)). Residues 93–116 (VKEIGSRLFLDSGTLTPLLKRLEA) constitute a DNA-binding region (H-T-H motif).

The protein localises to the cytoplasm. Its function is as follows. Formaldehyde-responsive transcription factor that modulates resistance to stress induced by formaldehyde. Impacts the expression of a number of genes encoding transcription factors and/or involved in stress response, including efgA, and which probably collectively trigger a formaldehyde-specific physiological response. Required for optimal transition to methylotrophy. Not involved in a general stress response. The chain is HTH-type transcriptional regulator TtmR from Methylorubrum extorquens (strain PA1) (Methylobacterium extorquens).